Reading from the N-terminus, the 98-residue chain is Putative zinc finger protein ORF98b (98 aa).

Residues 54 to 77 (GFCPYCHNHYRTFGILANHIMRSH) form a C2H2-type zinc finger.

The protein is Putative zinc finger protein ORF98b of Acidianus convivator (ATV).